The primary structure comprises 247 residues: UPF0259 membrane protein BU276 (247 aa).

6 helical membrane passes run 20–40, 85–105, 114–134, 137–157, 188–208, and 218–238; these read IGAI…IDMF, IMES…LISV, IVSS…LNFL, FIIQ…SIIL, IIGP…MLLA, and LFLI…IYLF.

It belongs to the UPF0259 family.

It localises to the cell membrane. The polypeptide is UPF0259 membrane protein BU276 (Buchnera aphidicola subsp. Acyrthosiphon pisum (strain APS) (Acyrthosiphon pisum symbiotic bacterium)).